The chain runs to 555 residues: Glutamine--tRNA ligase (555 aa).

A 'HIGH' region motif is present at residues 34 to 44; it reads PEPNGYLHIGH. Residues 35–37 and 41–47 each bind ATP; these read EPN and HIGHAKS. The L-glutamine site is built by D67 and Y212. Residues T231, 261 to 262, and 269 to 271 contribute to the ATP site; these read RL and MSK. The short motif at 268–272 is the 'KMSKS' region element; that stretch reads VMSKR. The tract at residues 317-324 is interaction with tRNA; that stretch reads TKQDNTIE.

Belongs to the class-I aminoacyl-tRNA synthetase family. Monomer.

It is found in the cytoplasm. The catalysed reaction is tRNA(Gln) + L-glutamine + ATP = L-glutaminyl-tRNA(Gln) + AMP + diphosphate. This chain is Glutamine--tRNA ligase, found in Salmonella schwarzengrund (strain CVM19633).